A 315-amino-acid polypeptide reads, in one-letter code: Malate dehydrogenase (315 aa).

Residues 7 to 12 and Asp-32 contribute to the NAD(+) site; that span reads GAGNIG. Positions 81 and 87 each coordinate substrate. NAD(+) is bound by residues Asn-94 and 117 to 119; that span reads VTN. Substrate-binding residues include Asn-119 and Arg-150. His-174 acts as the Proton acceptor in catalysis.

The protein belongs to the LDH/MDH superfamily. MDH type 3 family.

The catalysed reaction is (S)-malate + NAD(+) = oxaloacetate + NADH + H(+). Its function is as follows. Catalyzes the reversible oxidation of malate to oxaloacetate. The sequence is that of Malate dehydrogenase from Neorickettsia sennetsu (strain ATCC VR-367 / Miyayama) (Ehrlichia sennetsu).